The chain runs to 181 residues: TATA-box-binding protein (181 aa).

Repeat copies occupy residues 7 to 83 and 98 to 173.

The protein belongs to the TBP family.

In terms of biological role, general factor that plays a role in the activation of archaeal genes transcribed by RNA polymerase. Binds specifically to the TATA box promoter element which lies close to the position of transcription initiation. In Methanococcus vannielii (strain ATCC 35089 / DSM 1224 / JCM 13029 / OCM 148 / SB), this protein is TATA-box-binding protein.